Consider the following 345-residue polypeptide: MSTPTQLSYKDAGVDIDAGNALVDNIKSAVKRTHRPEVMGNLGGFGALCELPTKYKHPVLVSGTDGVGTKLRLAIDYQKHDSVGVDLVAMCVNDLIVAGAEPLFFLDYYATGKLDVATATSVVNGIAEGCAQSGCALIGGETAEMPGMYEGEDYDLAGFCVGVVEKEDVLDGSKVVAGDALIALGSSGPHSNGYSLIRKVLEVSKADPQQDLEGKPLIDHLLEPTKIYVKPLLKLLEKHDIHAMAHITGGGFWENIPRVLPNDAKAVVKGDSWQWPTVFNWLMENGNIAEFEMYRTFNCGVGMIIALPQDQVDAALTLLKAEGENAWLIGDIASRNGDEEQVEIC.

This sequence belongs to the AIR synthase family.

Its subcellular location is the cytoplasm. It catalyses the reaction 2-formamido-N(1)-(5-O-phospho-beta-D-ribosyl)acetamidine + ATP = 5-amino-1-(5-phospho-beta-D-ribosyl)imidazole + ADP + phosphate + H(+). Its pathway is purine metabolism; IMP biosynthesis via de novo pathway; 5-amino-1-(5-phospho-D-ribosyl)imidazole from N(2)-formyl-N(1)-(5-phospho-D-ribosyl)glycinamide: step 2/2. In Shewanella loihica (strain ATCC BAA-1088 / PV-4), this protein is Phosphoribosylformylglycinamidine cyclo-ligase.